Reading from the N-terminus, the 393-residue chain is Phosphoglycerate kinase (393 aa).

Substrate contacts are provided by residues 21–23 (DMN), arginine 36, 59–62 (HLGR), arginine 114, and arginine 147. Residues lysine 198, glutamate 320, and 346–349 (GGDT) contribute to the ATP site.

It belongs to the phosphoglycerate kinase family. As to quaternary structure, monomer.

Its subcellular location is the cytoplasm. The enzyme catalyses (2R)-3-phosphoglycerate + ATP = (2R)-3-phospho-glyceroyl phosphate + ADP. It participates in carbohydrate degradation; glycolysis; pyruvate from D-glyceraldehyde 3-phosphate: step 2/5. The protein is Phosphoglycerate kinase of Thiobacillus denitrificans (strain ATCC 25259 / T1).